The chain runs to 461 residues: Phosphatidate cytidylyltransferase 1 (461 aa).

The segment at 1–68 (MLELRHRGGC…PEVPPSSDRT (68 aa)) is disordered. Omega-N-methylarginine is present on arginine 7. The span at 22 to 56 (REGEAAGGDHETESTSDKETDIDDRYGDLDARGDS) shows a compositional bias: basic and acidic residues. Serine 35 and serine 37 each carry phosphoserine. 6 helical membrane passes run 96–116 (MISLFFLIIYMGSFMLMLLVL), 149–169 (FLLCVNYFFYGETVADYFATF), 183–203 (HRFISFALYLAGFCMFVLSLV), 230–250 (LVIQNLFEGMIWFLVPISSVI), 279–299 (GFIGGFFSTVIFGFIAAYVLS), and 357–377 (IALSTFASLIGPFGGFFASGF).

This sequence belongs to the CDS family. Homodimer. Interacts with FOS; this interaction may enhance catalytic activity. Mg(2+) is required as a cofactor. In terms of tissue distribution, expressed in adult brain, eye, smooth muscle and testis. Highly expressed in the inner segment of the photoreceptor layer of adult retina.

It is found in the endoplasmic reticulum membrane. The catalysed reaction is a 1,2-diacyl-sn-glycero-3-phosphate + CTP + H(+) = a CDP-1,2-diacyl-sn-glycerol + diphosphate. It carries out the reaction 1-octadecanoyl-2-(5Z,8Z,11Z,14Z-eicosatetraenoyl)-sn-glycero-3-phosphate + CTP + H(+) = 1-octadecanoyl-2-(5Z,8Z,11Z,14Z-eicosatetraenoyl)-sn-glycero-3-cytidine-5'-diphosphate + diphosphate. The enzyme catalyses 1-octadecanoyl-2-(9Z,12Z-octadecadienoyl)-sn-glycero-3-phosphate + CTP + H(+) = 1-octadecanoyl-2-(9Z,12Z-octadecadienoyl)-sn-glycero-3-cytidine-5'-diphosphate + diphosphate. It catalyses the reaction 1-hexadecanoyl-2-(5Z,8Z,11Z,14Z-eicosatetraenoyl)-sn-glycero-3-phosphate + CTP + H(+) = 1-hexadecanoyl-2-(5Z,8Z,11Z,14Z-eicosatetraenoyl)-sn-glycero-3-cytidine-5'-diphosphate + diphosphate. The catalysed reaction is 1,2-di-(5Z,8Z,11Z,14Z)-eicosatetraenoyl-sn-glycero-3-phosphate + CTP + H(+) = 1,2-di-(5Z,8Z,11Z,14Z-eicosatetraenoyl)-sn-glycero-3-cytidine-5'-diphosphate + diphosphate. It carries out the reaction 1-octadecanoyl-2-(9Z-octadecenoyl)-sn-glycero-3-phosphate + CTP + H(+) = 1-octadecanoyl-2-(9Z-octadecenoyl)-sn-glycero-3-cytidine-5'-diphosphate + diphosphate. The enzyme catalyses 1-octadecanoyl-2-(4Z,7Z,10Z,13Z,16Z,19Z-docosahexaenoyl)-sn-glycero-3-phosphate + CTP + H(+) = 1-octadecanoyl-2-(4Z,7Z,10Z,13Z,16Z,19Z-docosahexaenoyl)-sn-glycero-3-cytidine-5'-diphosphate + diphosphate. It catalyses the reaction 1,2-di-(9Z,12Z-octadecadienoyl)-sn-glycero-3-phosphate + CTP + H(+) = 1,2-di-(9Z,12Z-octadecadienoyl)-sn-glycero-3-cytidine-5'-diphosphate + diphosphate. The catalysed reaction is 1,2-di-(9Z-octadecenoyl)-sn-glycero-3-phosphate + CTP + H(+) = 1,2-di-(9Z-octadecenoyl)-sn-glycero-3-cytidine-5'-diphosphate + diphosphate. It functions in the pathway phospholipid metabolism; CDP-diacylglycerol biosynthesis; CDP-diacylglycerol from sn-glycerol 3-phosphate: step 3/3. Its function is as follows. Catalyzes the conversion of phosphatidic acid (PA) to CDP-diacylglycerol (CDP-DAG), an essential intermediate in the synthesis of phosphatidylglycerol, cardiolipin and phosphatidylinositol. Exhibits almost no acyl chain preference for PA, showing no discrimination for the sn-1/sn-2 acyl chain composition of PAs. Plays an important role in regulating the growth of lipid droplets which are storage organelles at the center of lipid and energy homeostasis. Positively regulates the differentiation and development of adipocytes. The sequence is that of Phosphatidate cytidylyltransferase 1 from Mus musculus (Mouse).